The following is a 136-amino-acid chain: uncharacterized protein (136 aa).

The protein resides in the cytoplasm. Its subcellular location is the nucleus. This is an uncharacterized protein from Schizosaccharomyces pombe (strain 972 / ATCC 24843) (Fission yeast).